The following is a 620-amino-acid chain: uncharacterized protein (620 aa).

In terms of domain architecture, Radical SAM core spans 324-586 (RRYVTIAIIK…HPWEKGIYPT (263 aa)). The [4Fe-4S] cluster site is built by cysteine 338, cysteine 342, and cysteine 345. Lysine 552 is modified (N6-(pyridoxal phosphate)lysine).

Belongs to the radical SAM superfamily. KamA family. It depends on [4Fe-4S] cluster as a cofactor. Requires pyridoxal 5'-phosphate as cofactor.

This is an uncharacterized protein from Methanocaldococcus jannaschii (strain ATCC 43067 / DSM 2661 / JAL-1 / JCM 10045 / NBRC 100440) (Methanococcus jannaschii).